The primary structure comprises 337 residues: Large ribosomal subunit protein uL3 (337 aa).

The interval 1-29 (MPKINRPRRGSLAFSPRKRAQSPIPKYKS) is disordered.

Belongs to the universal ribosomal protein uL3 family. As to quaternary structure, part of the 50S ribosomal subunit. Forms a cluster with proteins L14 and L24e.

Its function is as follows. One of the primary rRNA binding proteins, it binds directly near the 3'-end of the 23S rRNA, where it nucleates assembly of the 50S subunit. The chain is Large ribosomal subunit protein uL3 from Methanoregula boonei (strain DSM 21154 / JCM 14090 / 6A8).